The primary structure comprises 222 residues: Chromatin-associated protein SWI6 (222 aa).

Basic and acidic residues predominate over residues 1–15 (MPVIKKEELSQKKDL). 2 disordered regions span residues 1-26 (MPVIKKEELSQKKDLESEEEDSGLED) and 77-147 (ETQD…DRQY). Over residues 16-26 (ESEEEDSGLED) the composition is skewed to acidic residues. The Chromo domain maps to 28–87 (YEVEKVIKHRGKGKNIEFLVRWKGYGPEYDTWEPTENVASAEEAVAAYWETQDKTATAPR).

As to quaternary structure, interacts with DMT5.

It localises to the nucleus. In terms of biological role, recognizes and binds histone H3 tails methylated at 'Lys-9', leading to epigenetic repression. Localizes DMT5 to heterochromatin characterized by trimethylation of histone H3 tails at 'Lys-9'. This is Chromatin-associated protein SWI6 from Cryptococcus neoformans var. grubii serotype A (strain H99 / ATCC 208821 / CBS 10515 / FGSC 9487) (Filobasidiella neoformans var. grubii).